The following is an 84-amino-acid chain: Small ribosomal subunit protein bS18 (84 aa).

It belongs to the bacterial ribosomal protein bS18 family. Part of the 30S ribosomal subunit. Forms a tight heterodimer with protein bS6.

Its function is as follows. Binds as a heterodimer with protein bS6 to the central domain of the 16S rRNA, where it helps stabilize the platform of the 30S subunit. The sequence is that of Small ribosomal subunit protein bS18 from Maricaulis maris (strain MCS10) (Caulobacter maris).